Here is a 124-residue protein sequence, read N- to C-terminus: Fluoride-specific ion channel FluC 1 (124 aa).

The next 4 helical transmembrane spans lie at 1-21 (MCAVSLTKPVAVVALGGALGA), 30-50 (LWPGIWTVLLINVVGSLLLGY), 64-84 (FLGVGVLGGFTTFSTFAVDAV), and 93-113 (LYVVATLIPALLAARLGMLAG). 2 residues coordinate Na(+): Gly71 and Thr74.

It belongs to the fluoride channel Fluc/FEX (TC 1.A.43) family.

The protein localises to the cell membrane. It catalyses the reaction fluoride(in) = fluoride(out). With respect to regulation, na(+) is not transported, but it plays an essential structural role and its presence is essential for fluoride channel function. Fluoride-specific ion channel. Important for reducing fluoride concentration in the cell, thus reducing its toxicity. The sequence is that of Fluoride-specific ion channel FluC 1 from Rhodococcus jostii (strain RHA1).